Reading from the N-terminus, the 375-residue chain is Chaperone protein DnaJ (375 aa).

In terms of domain architecture, J spans 5-70; that stretch reads GYYEVLGVSK…QKRQAYDQFG (66 aa). Residues 142–220 form a CR-type zinc finger; the sequence is GKEYKIEIPR…CKGEGLTEKR (79 aa). Zn(2+)-binding residues include cysteine 155, cysteine 158, cysteine 172, cysteine 175, cysteine 194, cysteine 197, cysteine 208, and cysteine 211. 4 CXXCXGXG motif repeats span residues 155-162, 172-179, 194-201, and 208-215; these read CVDCTGSG, CPDCSGTG, CPRCKGKG, and CKTCKGEG.

The protein belongs to the DnaJ family. Homodimer. Zn(2+) is required as a cofactor.

Its subcellular location is the cytoplasm. Its function is as follows. Participates actively in the response to hyperosmotic and heat shock by preventing the aggregation of stress-denatured proteins and by disaggregating proteins, also in an autonomous, DnaK-independent fashion. Unfolded proteins bind initially to DnaJ; upon interaction with the DnaJ-bound protein, DnaK hydrolyzes its bound ATP, resulting in the formation of a stable complex. GrpE releases ADP from DnaK; ATP binding to DnaK triggers the release of the substrate protein, thus completing the reaction cycle. Several rounds of ATP-dependent interactions between DnaJ, DnaK and GrpE are required for fully efficient folding. Also involved, together with DnaK and GrpE, in the DNA replication of plasmids through activation of initiation proteins. The chain is Chaperone protein DnaJ from Leptospira biflexa serovar Patoc (strain Patoc 1 / Ames).